We begin with the raw amino-acid sequence, 954 residues long: Valine--tRNA ligase (954 aa).

Residues 48–58 carry the 'HIGH' region motif; sequence PNVTGSLHMGH. A 'KMSKS' region motif is present at residues 560-564; it reads KMSKS. Residue Lys-563 coordinates ATP. A coiled-coil region spans residues 883-954; the sequence is AGFINKEAEL…QTQYQAIENL (72 aa).

It belongs to the class-I aminoacyl-tRNA synthetase family. ValS type 1 subfamily. As to quaternary structure, monomer.

It is found in the cytoplasm. The catalysed reaction is tRNA(Val) + L-valine + ATP = L-valyl-tRNA(Val) + AMP + diphosphate. In terms of biological role, catalyzes the attachment of valine to tRNA(Val). As ValRS can inadvertently accommodate and process structurally similar amino acids such as threonine, to avoid such errors, it has a 'posttransfer' editing activity that hydrolyzes mischarged Thr-tRNA(Val) in a tRNA-dependent manner. The polypeptide is Valine--tRNA ligase (Actinobacillus pleuropneumoniae serotype 3 (strain JL03)).